Reading from the N-terminus, the 598-residue chain is Beta-galactosidase (598 aa).

The N-terminal stretch at 1–21 is a signal peptide; that stretch reads MLRTTLAPLVLALALALPAAA. The active-site Proton donor is the E184. Catalysis depends on E260, which acts as the Nucleophile.

The protein belongs to the glycosyl hydrolase 35 family.

It carries out the reaction Hydrolysis of terminal non-reducing beta-D-galactose residues in beta-D-galactosides.. Preferentially hydrolyzes beta(1-&gt;3) galactosyl linkages over beta(1-&gt;4) linkages. This chain is Beta-galactosidase (bga), found in Xanthomonas manihotis.